We begin with the raw amino-acid sequence, 119 residues long: Large ribosomal subunit protein bL20 (119 aa).

It belongs to the bacterial ribosomal protein bL20 family.

Binds directly to 23S ribosomal RNA and is necessary for the in vitro assembly process of the 50S ribosomal subunit. It is not involved in the protein synthesizing functions of that subunit. This chain is Large ribosomal subunit protein bL20, found in Rhodopseudomonas palustris (strain HaA2).